A 450-amino-acid polypeptide reads, in one-letter code: Putative MYST-like histone acetyltransferase 1 (450 aa).

The region spanning 63–122 (LEVGTRVMCRWRDQKLHPVKVIERRKSSTSSSPADYEYYVHYTEFNRRLDEWVKLEQLDL) is the Tudor-knot domain. Residues 174–445 (TKVKNIAKIE…VDVSKLIWTP (272 aa)) enclose the MYST-type HAT domain. The C2HC MYST-type zinc finger occupies 207 to 232 (LFFCEFCLNFMKRKEQLQRHMKKCDL). The residue at position 274 (lysine 274) is an N6-acetyllysine; by autocatalysis. Acetyl-CoA-binding positions include 317-319 (ILT) and 324-330 (QRKGYGK). Catalysis depends on glutamate 350, which acts as the Proton donor/acceptor. Serine 354 is an acetyl-CoA binding site.

It belongs to the MYST (SAS/MOZ) family. Post-translationally, autoacetylation at Lys-274 is required for proper function.

It localises to the nucleus. It carries out the reaction L-lysyl-[protein] + acetyl-CoA = N(6)-acetyl-L-lysyl-[protein] + CoA + H(+). Its function is as follows. Histone acetyltransferase which may be involved in transcriptional activation. This is Putative MYST-like histone acetyltransferase 1 from Oryza sativa subsp. japonica (Rice).